Consider the following 602-residue polypeptide: DNA mismatch repair protein MutL (602 aa).

The protein belongs to the DNA mismatch repair MutL/HexB family.

Its function is as follows. This protein is involved in the repair of mismatches in DNA. It is required for dam-dependent methyl-directed DNA mismatch repair. May act as a 'molecular matchmaker', a protein that promotes the formation of a stable complex between two or more DNA-binding proteins in an ATP-dependent manner without itself being part of a final effector complex. This chain is DNA mismatch repair protein MutL, found in Baumannia cicadellinicola subsp. Homalodisca coagulata.